The chain runs to 346 residues: Golgi to ER traffic protein 4 (346 aa).

Positions 317–346 are disordered; that stretch reads GQNQGGSRRTPQGRSQSKTVEAPPASMELD. A compositionally biased stretch (polar residues) spans 321 to 335; that stretch reads GGSRRTPQGRSQSKT.

Belongs to the GET4 family. As to quaternary structure, component of the get4/get5/sgt2 sorting complex.

It localises to the cytoplasm. Functionally, component of the get4/get5/sgt2 sorting complex involved in the GET (guided entry of TA proteins) pathway that leads to the insertion of tail-anchored (TA) proteins into the endoplasmic reticulum. Get4 and get5 form an obligate complex that catalyzes the transfer of tail-anchored proteins destined to the endoplasmic reticulum from sgt2 to the cytosolic targeting factor which then targets the TA protein to the ER membrane via get1/get2. In Aspergillus fumigatus (strain ATCC MYA-4609 / CBS 101355 / FGSC A1100 / Af293) (Neosartorya fumigata), this protein is Golgi to ER traffic protein 4.